A 127-amino-acid polypeptide reads, in one-letter code: Fumarate reductase subunit C (127 aa).

Transmembrane regions (helical) follow at residues 30 to 50 (ATIL…GSLV), 67 to 87 (IVVA…QTFF), and 107 to 127 (VVVL…LVIV).

It belongs to the FrdC family. Part of an enzyme complex containing four subunits: a flavoprotein (FrdA), an iron-sulfur protein (FrdB), and two hydrophobic anchor proteins (FrdC and FrdD).

It localises to the cell inner membrane. In terms of biological role, anchors the catalytic components of the fumarate reductase complex to the cell membrane, binds quinones. This is Fumarate reductase subunit C from Aliivibrio salmonicida (strain LFI1238) (Vibrio salmonicida (strain LFI1238)).